Reading from the N-terminus, the 440-residue chain is Probable pectate lyase 10 (440 aa).

An N-terminal signal peptide occupies residues 1–28 (MVIFSRSFLALSTTLIILALCINSSTMA). Residues 32-56 (EDLNSHSSSNSSTANKLPNDDGAWN) are disordered. N-linked (GlcNAc...) asparagine glycans are attached at residues asparagine 41 and asparagine 76. The Ca(2+) site is built by aspartate 238, aspartate 262, and aspartate 266. The active site involves arginine 318.

Belongs to the polysaccharide lyase 1 family. Ca(2+) serves as cofactor.

It carries out the reaction Eliminative cleavage of (1-&gt;4)-alpha-D-galacturonan to give oligosaccharides with 4-deoxy-alpha-D-galact-4-enuronosyl groups at their non-reducing ends.. The protein operates within glycan metabolism; pectin degradation; 2-dehydro-3-deoxy-D-gluconate from pectin: step 2/5. This is Probable pectate lyase 10 from Arabidopsis thaliana (Mouse-ear cress).